Consider the following 246-residue polypeptide: tRNA (guanine-N(1)-)-methyltransferase (246 aa).

S-adenosyl-L-methionine-binding positions include Gly117 and 137 to 142 (IGDYVL).

It belongs to the RNA methyltransferase TrmD family. As to quaternary structure, homodimer.

It is found in the cytoplasm. The enzyme catalyses guanosine(37) in tRNA + S-adenosyl-L-methionine = N(1)-methylguanosine(37) in tRNA + S-adenosyl-L-homocysteine + H(+). Specifically methylates guanosine-37 in various tRNAs. In Acinetobacter baumannii (strain SDF), this protein is tRNA (guanine-N(1)-)-methyltransferase.